The following is a 106-amino-acid chain: Malonate decarboxylase acyl carrier protein (106 aa).

S28 is subject to O-(phosphoribosyl dephospho-coenzyme A)serine.

The protein belongs to the MdcC family. Covalently binds the prosthetic group of malonate decarboxylase.

The protein localises to the cytoplasm. In terms of biological role, subunit of malonate decarboxylase, it is an acyl carrier protein to which acetyl and malonyl thioester residues are bound via a 2'-(5''-phosphoribosyl)-3'-dephospho-CoA prosthetic group and turn over during the catalytic mechanism. In Stenotrophomonas maltophilia (strain R551-3), this protein is Malonate decarboxylase acyl carrier protein.